We begin with the raw amino-acid sequence, 362 residues long: 3-dehydroquinate synthase (362 aa).

NAD(+) contacts are provided by residues 95 to 99 (GVVGD), 119 to 120 (TT), K132, and K141. Zn(2+) is bound by residues E174, H238, and H255.

The protein belongs to the sugar phosphate cyclases superfamily. Dehydroquinate synthase family. It depends on Co(2+) as a cofactor. The cofactor is Zn(2+). Requires NAD(+) as cofactor.

The protein resides in the cytoplasm. The enzyme catalyses 7-phospho-2-dehydro-3-deoxy-D-arabino-heptonate = 3-dehydroquinate + phosphate. Its pathway is metabolic intermediate biosynthesis; chorismate biosynthesis; chorismate from D-erythrose 4-phosphate and phosphoenolpyruvate: step 2/7. In terms of biological role, catalyzes the conversion of 3-deoxy-D-arabino-heptulosonate 7-phosphate (DAHP) to dehydroquinate (DHQ). In Chlorobium luteolum (strain DSM 273 / BCRC 81028 / 2530) (Pelodictyon luteolum), this protein is 3-dehydroquinate synthase.